The sequence spans 318 residues: Putative HTH-type transcriptional regulatory protein MJ1164 (318 aa).

The HTH cro/C1-type domain maps to 131–189 (LKEVREAMGISVGKLAEVAGVSRKAIYKYETQMANPSVDVALKIEEFLDVPLVKGIDLF). The H-T-H motif DNA-binding region spans 142–161 (VGKLAEVAGVSRKAIYKYET).

The chain is Putative HTH-type transcriptional regulatory protein MJ1164 from Methanocaldococcus jannaschii (strain ATCC 43067 / DSM 2661 / JAL-1 / JCM 10045 / NBRC 100440) (Methanococcus jannaschii).